The chain runs to 252 residues: Type III pantothenate kinase (252 aa).

6–13 contacts ATP; sequence DIGNTNTV. Substrate is bound at residue 105–108; sequence GADR. Residue Asp-107 is the Proton acceptor of the active site. K(+) is bound at residue Asp-127. Position 130 (Thr-130) interacts with ATP. Thr-182 contacts substrate.

The protein belongs to the type III pantothenate kinase family. As to quaternary structure, homodimer. It depends on NH4(+) as a cofactor. Requires K(+) as cofactor.

Its subcellular location is the cytoplasm. The catalysed reaction is (R)-pantothenate + ATP = (R)-4'-phosphopantothenate + ADP + H(+). It functions in the pathway cofactor biosynthesis; coenzyme A biosynthesis; CoA from (R)-pantothenate: step 1/5. Catalyzes the phosphorylation of pantothenate (Pan), the first step in CoA biosynthesis. The polypeptide is Type III pantothenate kinase (Salinispora arenicola (strain CNS-205)).